The following is a 699-amino-acid chain: Endogenous retrovirus group K member 8 Env polyprotein (699 aa).

Positions 1–47 (MNPSEMQRKAPPRRRRHRNRAPLTHKMNKMVTSEEQMKLPSTKKAEP) are disordered. A signal peptide spans 1–89 (MNPSEMQRKA…ALMIVSMVVS (89 aa)). Positions 10–20 (APPRRRRHRNR) are enriched in basic residues. Residues 90–632 (LPMPAGAAVA…NLNPVTWVKT (543 aa)) are Extracellular-facing. N-linked (GlcNAc...) asparagine glycans are attached at residues N100, N128, N153, N274, N355, N372, and N461. Residues 466–486 (FIFTLIAVIMGLIAVTATAAV) are fusion peptide. Residues N507, N554, N566, and N585 are each glycosylated (N-linked (GlcNAc...) asparagine). The helical transmembrane segment at 633 to 653 (IGSTTIINLILILVCLFCLLL) threads the bilayer. Topologically, residues 654–699 (VCRCTQQLRRDSDHRERAMMTMAVLSKRKGGNVGKSKRDQIVTVSV) are cytoplasmic.

This sequence belongs to the beta type-B retroviral envelope protein family. HERV class-II K(HML-2) env subfamily. The surface (SU) and transmembrane (TM) proteins form a heterodimer. SU and TM are attached by noncovalent interactions or by a labile interchain disulfide bond. Post-translationally, specific enzymatic cleavages in vivo yield the mature SU and TM proteins.

The protein resides in the cell membrane. Its subcellular location is the virion. Retroviral envelope proteins mediate receptor recognition and membrane fusion during early infection. Endogenous envelope proteins may have kept, lost or modified their original function during evolution. This endogenous envelope protein has lost its original fusogenic properties. Its function is as follows. SU mediates receptor recognition. In terms of biological role, TM anchors the envelope heterodimer to the viral membrane through one transmembrane domain. The other hydrophobic domain, called fusion peptide, mediates fusion of the viral membrane with the target cell membrane. In Homo sapiens (Human), this protein is Endogenous retrovirus group K member 8 Env polyprotein (ERVK-8).